The primary structure comprises 440 residues: MTNMSWSFLTRLLEEIHNHSTFVGKVWLTVLVVFRIVLTAVGGESIYSDEQSKFTCNTRQPGCDNVCYDAFAPLSHVRFWVFQIVVISTPSVMYLGYAVHRLARASEQERRRALRRRPGTRRLPRAQLPPPPPGWPDTTDLGEAEPILALEEDEDEEPGAPEGPGEDTEEERAEDVAAKGGGGDGKTVVTPGPAGQHDGRRRIQREGLMRVYVAQLVVRAAFEVAFLVGQYLLYGFEVPPFFACSRQPCPHVVDCFVSRPTEKTVFLLVMYVVSCLCLLLNLCEMAHLGLGSAQDAVRGRRGASAAGPGPTPRPPPCAFPAAAAGLACPPDYSLVVRAAERARAHDQNLANLALQALRDGAAVAAVSADRDSPPCAGLNATSRGAPRVGGLASGTGSATSGGTVGEQSRPGAQEQLATKPRAGSEKGSTGSRDGKATVWI.

The Cytoplasmic portion of the chain corresponds to 1 to 21; the sequence is MTNMSWSFLTRLLEEIHNHST. The helical transmembrane segment at 22–42 threads the bilayer; the sequence is FVGKVWLTVLVVFRIVLTAVG. At 43-78 the chain is on the extracellular side; that stretch reads GESIYSDEQSKFTCNTRQPGCDNVCYDAFAPLSHVR. The helical transmembrane segment at 79-99 threads the bilayer; the sequence is FWVFQIVVISTPSVMYLGYAV. Over 100–223 the chain is Cytoplasmic; sequence HRLARASEQE…AQLVVRAAFE (124 aa). The disordered stretch occupies residues 108 to 199; that stretch reads QERRRALRRR…TPGPAGQHDG (92 aa). The span at 112 to 124 shows a compositional bias: basic residues; the sequence is RALRRRPGTRRLP. The span at 136–149 shows a compositional bias: low complexity; sequence PDTTDLGEAEPILA. The span at 150–173 shows a compositional bias: acidic residues; it reads LEEDEDEEPGAPEGPGEDTEEERA. A helical membrane pass occupies residues 224–244; the sequence is VAFLVGQYLLYGFEVPPFFAC. At 245–264 the chain is on the extracellular side; that stretch reads SRQPCPHVVDCFVSRPTEKT. Residues 265–285 traverse the membrane as a helical segment; sequence VFLLVMYVVSCLCLLLNLCEM. The Cytoplasmic segment spans residues 286–440; that stretch reads AHLGLGSAQD…SRDGKATVWI (155 aa). Positions 369–440 are disordered; that stretch reads DRDSPPCAGL…SRDGKATVWI (72 aa). A Phosphoserine modification is found at serine 372. Residues 388–401 show a composition bias toward low complexity; sequence VGGLASGTGSATSG.

This sequence belongs to the connexin family. Gamma-type subfamily. As to quaternary structure, a connexon is composed of a hexamer of connexins. Interacts with TJP1. Mainly expressed by oligodendrocytes in the central nervous system (at protein level).

It localises to the cell membrane. The protein localises to the cell junction. Its subcellular location is the gap junction. Functionally, one gap junction consists of a cluster of closely packed pairs of transmembrane channels, the connexons, through which materials of low MW diffuse from one cell to a neighboring cell. May play a role in myelination in central and peripheral nervous systems. The polypeptide is Gap junction gamma-2 protein (Gjc2) (Mus musculus (Mouse)).